Consider the following 141-residue polypeptide: MAKKVVALIKLALPAGKANPAPPVGPALGQHGVNIMAFCKEYNARTQDKVGLVIPVEISVFEDRSFTFILKTPPASVLIAKAAGIERGSGNPNKTKVGKITTAQLREIAETKLPDLNTKNVEAAMRIVEGTARNMGVTIAD.

It belongs to the universal ribosomal protein uL11 family. Part of the ribosomal stalk of the 50S ribosomal subunit. Interacts with L10 and the large rRNA to form the base of the stalk. L10 forms an elongated spine to which L12 dimers bind in a sequential fashion forming a multimeric L10(L12)X complex. In terms of processing, one or more lysine residues are methylated.

Its function is as follows. Forms part of the ribosomal stalk which helps the ribosome interact with GTP-bound translation factors. In Synechococcus elongatus (strain ATCC 33912 / PCC 7942 / FACHB-805) (Anacystis nidulans R2), this protein is Large ribosomal subunit protein uL11.